The chain runs to 146 residues: 3-hydroxyacyl-[acyl-carrier-protein] dehydratase FabZ (146 aa).

The active site involves His49.

It belongs to the thioester dehydratase family. FabZ subfamily.

Its subcellular location is the cytoplasm. The enzyme catalyses a (3R)-hydroxyacyl-[ACP] = a (2E)-enoyl-[ACP] + H2O. Involved in unsaturated fatty acids biosynthesis. Catalyzes the dehydration of short chain beta-hydroxyacyl-ACPs and long chain saturated and unsaturated beta-hydroxyacyl-ACPs. The chain is 3-hydroxyacyl-[acyl-carrier-protein] dehydratase FabZ from Pseudomonas savastanoi pv. phaseolicola (strain 1448A / Race 6) (Pseudomonas syringae pv. phaseolicola (strain 1448A / Race 6)).